A 298-amino-acid polypeptide reads, in one-letter code: ATP phosphoribosyltransferase (298 aa).

Belongs to the ATP phosphoribosyltransferase family. Long subfamily. Mg(2+) serves as cofactor.

It localises to the cytoplasm. It carries out the reaction 1-(5-phospho-beta-D-ribosyl)-ATP + diphosphate = 5-phospho-alpha-D-ribose 1-diphosphate + ATP. Its pathway is amino-acid biosynthesis; L-histidine biosynthesis; L-histidine from 5-phospho-alpha-D-ribose 1-diphosphate: step 1/9. With respect to regulation, feedback inhibited by histidine. Functionally, catalyzes the condensation of ATP and 5-phosphoribose 1-diphosphate to form N'-(5'-phosphoribosyl)-ATP (PR-ATP). Has a crucial role in the pathway because the rate of histidine biosynthesis seems to be controlled primarily by regulation of HisG enzymatic activity. The protein is ATP phosphoribosyltransferase of Aeromonas hydrophila subsp. hydrophila (strain ATCC 7966 / DSM 30187 / BCRC 13018 / CCUG 14551 / JCM 1027 / KCTC 2358 / NCIMB 9240 / NCTC 8049).